A 503-amino-acid polypeptide reads, in one-letter code: MDFSIKGCDWSKGEAKGFLTGKSDCIVLGIFEAQTLSGAALDIDTATKGLISRVVKAGDMDGKRGKTLFLPEVSGIGASRVLLVGLGKQDAFNQKAYNDAVTAAWRALLATKVVQVTFTLAQLPVDERGSDWGVRAAILALRNETYRFTQMKSKPEPVSHTLKRVVFSVEPADEKAAKVAVKQAVALANGMDLTRDLGNLPGNVCTPTYLANTAKQLAKDWGMKAEVLGLKQIQALKMGSFLSVARASVEPPQFIVLHYQGAAAKAAPIVLVGKGITFDTGGISLKPGEGMDEMKYDMCGAGSVLGTIRAVAEMGLKLNVVGIIPTCENMPGGNATKPGDVVTSMKGLTIEVLNTDAEGRLILCDALTYAERFKPAAVIDIATLTGACIIALGHHNSGLFSKDDALAGELLDASREANDPAWRLPLDDEYQDQLKSNFADLANIGGRPAGSVTAACFLSRFTENYPWAHLDIAGTAWKSGAAKGATGRPVPLLAQFLIDRAGQ.

The Mn(2+) site is built by lysine 274 and aspartate 279. Lysine 286 is an active-site residue. Residues aspartate 297, aspartate 356, and glutamate 358 each contribute to the Mn(2+) site. The active site involves arginine 360.

The protein belongs to the peptidase M17 family. Mn(2+) serves as cofactor.

The protein resides in the cytoplasm. It carries out the reaction Release of an N-terminal amino acid, Xaa-|-Yaa-, in which Xaa is preferably Leu, but may be other amino acids including Pro although not Arg or Lys, and Yaa may be Pro. Amino acid amides and methyl esters are also readily hydrolyzed, but rates on arylamides are exceedingly low.. It catalyses the reaction Release of an N-terminal amino acid, preferentially leucine, but not glutamic or aspartic acids.. Functionally, presumably involved in the processing and regular turnover of intracellular proteins. Catalyzes the removal of unsubstituted N-terminal amino acids from various peptides. This Burkholderia multivorans (strain ATCC 17616 / 249) protein is Probable cytosol aminopeptidase.